Here is a 223-residue protein sequence, read N- to C-terminus: tRNA (guanine-N(7)-)-methyltransferase (223 aa).

Residues Glu45, Glu70, and Asp125 each contribute to the S-adenosyl-L-methionine site. Residue Asp125 is part of the active site. Substrate-binding positions include Lys129, Asp161, and 201–204 (TEYE).

This sequence belongs to the class I-like SAM-binding methyltransferase superfamily. TrmB family.

It carries out the reaction guanosine(46) in tRNA + S-adenosyl-L-methionine = N(7)-methylguanosine(46) in tRNA + S-adenosyl-L-homocysteine. The protein operates within tRNA modification; N(7)-methylguanine-tRNA biosynthesis. Its function is as follows. Catalyzes the formation of N(7)-methylguanine at position 46 (m7G46) in tRNA. The polypeptide is tRNA (guanine-N(7)-)-methyltransferase (Mesoplasma florum (strain ATCC 33453 / NBRC 100688 / NCTC 11704 / L1) (Acholeplasma florum)).